Reading from the N-terminus, the 416-residue chain is S-layer protein B (416 aa).

The N-terminal stretch at 1–20 (MKYNLLPLILLSLLVAPLLA) is a signal peptide. The stretch at 310–330 (IASLNSTIQSLESQISSLSST) forms a coiled coil. A helical membrane pass occupies residues 392-412 (IALAVSIIAIIISIVVLILVF).

Belongs to the Sulfolobales SlaB family. The mushroom-shaped unit cells of the Sulfolobales' S-layers may consist of three SlaB subunits and six SlaA subunits.

It is found in the secreted. Its subcellular location is the cell wall. The protein resides in the S-layer. It localises to the cell membrane. In terms of biological role, S-layer small protein. May anchor the complex to the cell membrane. The protein is S-layer protein B of Metallosphaera sedula (strain ATCC 51363 / DSM 5348 / JCM 9185 / NBRC 15509 / TH2).